The following is a 274-amino-acid chain: MKKTAIALLAWFVSSASLAATPWQKITHPVPGAAQSVGSFANGCIIGADTLPVQSDNYQVMRTDQRRYFGHPDLVMFIQRLSHQAHQRGLGTVLIGDMGMPAGGRFNGGHASHQTGLDVDIFLQLPKTRWSQAQLLRPQALDLVSRDGKHVVPSRWSSDIASLIKLAAEDNDVTRIFVNPAIKQQLCLDAGSDRDWLRKVRPWFQHRAHMHVRLRCPADSLECEDQPLPPPGDGCGAELQSWFEPPKPGTTKPEKKTPPPLPPSCQALLDEHVL.

The N-terminal stretch at 1-19 (MKKTAIALLAWFVSSASLA) is a signal peptide. 3 disulfides stabilise this stretch: Cys-44–Cys-265, Cys-187–Cys-235, and Cys-216–Cys-223. Zn(2+) contacts are provided by His-110, His-113, Asp-120, Asp-147, His-150, and His-211. The tract at residues 225–274 (DQPLPPPGDGCGAELQSWFEPPKPGTTKPEKKTPPPLPPSCQALLDEHVL) is disordered.

The protein belongs to the peptidase M74 family. In terms of assembly, dimer. The cofactor is Zn(2+).

It localises to the periplasm. Functionally, murein endopeptidase that cleaves the D-alanyl-meso-2,6-diamino-pimelyl amide bond that connects peptidoglycan strands. Likely plays a role in the removal of murein from the sacculus. The chain is Penicillin-insensitive murein endopeptidase from Salmonella arizonae (strain ATCC BAA-731 / CDC346-86 / RSK2980).